The following is a 422-amino-acid chain: Tryptophan synthase beta chain 1 (422 aa).

Position 107 is an N6-(pyridoxal phosphate)lysine (Lys107).

It belongs to the TrpB family. As to quaternary structure, tetramer of two alpha and two beta chains. Pyridoxal 5'-phosphate is required as a cofactor.

The enzyme catalyses (1S,2R)-1-C-(indol-3-yl)glycerol 3-phosphate + L-serine = D-glyceraldehyde 3-phosphate + L-tryptophan + H2O. Its pathway is amino-acid biosynthesis; L-tryptophan biosynthesis; L-tryptophan from chorismate: step 5/5. In terms of biological role, the beta subunit is responsible for the synthesis of L-tryptophan from indole and L-serine. This Sulfurisphaera tokodaii (strain DSM 16993 / JCM 10545 / NBRC 100140 / 7) (Sulfolobus tokodaii) protein is Tryptophan synthase beta chain 1 (trpB1).